We begin with the raw amino-acid sequence, 124 residues long: Large ribosomal subunit protein uL22 (124 aa).

Belongs to the universal ribosomal protein uL22 family. Part of the 50S ribosomal subunit.

Its function is as follows. This protein binds specifically to 23S rRNA; its binding is stimulated by other ribosomal proteins, e.g. L4, L17, and L20. It is important during the early stages of 50S assembly. It makes multiple contacts with different domains of the 23S rRNA in the assembled 50S subunit and ribosome. In terms of biological role, the globular domain of the protein is located near the polypeptide exit tunnel on the outside of the subunit, while an extended beta-hairpin is found that lines the wall of the exit tunnel in the center of the 70S ribosome. The protein is Large ribosomal subunit protein uL22 of Buchnera aphidicola subsp. Cinara cedri (strain Cc).